Reading from the N-terminus, the 382-residue chain is Sialidase (382 aa).

Arg37 contacts substrate. Cys42 and Cys103 are oxidised to a cystine. The Proton acceptor role is filled by Asp62. 3 BNR repeats span residues Ala71–Lys82, Tyr145–Lys156, and Ile210–Leu220. A substrate-binding site is contributed by Arg246. Residues Phe254–Glu265 form a BNR 4 repeat. Position 309 (Arg309) interacts with substrate. Catalysis depends on Tyr342, which acts as the Nucleophile. The active site involves Glu361.

Belongs to the glycosyl hydrolase 33 family. Monomer.

It catalyses the reaction Hydrolysis of alpha-(2-&gt;3)-, alpha-(2-&gt;6)-, alpha-(2-&gt;8)- glycosidic linkages of terminal sialic acid residues in oligosaccharides, glycoproteins, glycolipids, colominic acid and synthetic substrates.. Cleaves the terminal sialic acid (N-acetyl neuraminic acid) from carbohydrate chains in glycoproteins providing free sialic acid which can be used as carbon and energy sources. Sialidases have been suggested to be pathogenic factors in microbial infections. The chain is Sialidase (nanH) from Salmonella typhimurium (strain LT2 / SGSC1412 / ATCC 700720).